The following is a 499-amino-acid chain: Glycerol kinase (499 aa).

Thr13 is an ADP binding site. The ATP site is built by Thr13, Thr14, and Ser15. Sn-glycerol 3-phosphate is bound at residue Thr13. Arg17 is an ADP binding site. Sn-glycerol 3-phosphate is bound by residues Arg83, Glu84, Tyr135, and Asp245. Residues Arg83, Glu84, Tyr135, Asp245, and Gln246 each contribute to the glycerol site. ADP is bound by residues Thr267 and Gly310. Thr267, Gly310, Gln314, and Gly411 together coordinate ATP. Positions 411 and 415 each coordinate ADP.

The protein belongs to the FGGY kinase family.

It catalyses the reaction glycerol + ATP = sn-glycerol 3-phosphate + ADP + H(+). Its pathway is polyol metabolism; glycerol degradation via glycerol kinase pathway; sn-glycerol 3-phosphate from glycerol: step 1/1. With respect to regulation, inhibited by fructose 1,6-bisphosphate (FBP). Functionally, key enzyme in the regulation of glycerol uptake and metabolism. Catalyzes the phosphorylation of glycerol to yield sn-glycerol 3-phosphate. The chain is Glycerol kinase from Xanthomonas euvesicatoria pv. vesicatoria (strain 85-10) (Xanthomonas campestris pv. vesicatoria).